A 503-amino-acid chain; its full sequence is Cobyric acid synthase (503 aa).

A GATase cobBQ-type domain is found at 245 to 447 (DISIAIIRLP…LHGIFDEISL (203 aa)). Residue cysteine 326 is the Nucleophile of the active site. Histidine 439 is a catalytic residue.

Belongs to the CobB/CobQ family. CobQ subfamily.

It functions in the pathway cofactor biosynthesis; adenosylcobalamin biosynthesis. Functionally, catalyzes amidations at positions B, D, E, and G on adenosylcobyrinic A,C-diamide. NH(2) groups are provided by glutamine, and one molecule of ATP is hydrogenolyzed for each amidation. This is Cobyric acid synthase from Alkaliphilus metalliredigens (strain QYMF).